Consider the following 134-residue polypeptide: Insulin-like peptide 4 (134 aa).

A signal peptide spans 1 to 26 (MSLIRLGLALLLLLATVSQLLQPVQG). Cystine bridges form between cysteine 31/cysteine 120, cysteine 43/cysteine 133, and cysteine 119/cysteine 124. The propeptide at 54-108 (SSASKDARVRDLIRKLQQPDEDIEQETETGRLKQKHTDADTEKGVPPAVGSGRKL) is connecting peptide. The segment at 72–107 (PDEDIEQETETGRLKQKHTDADTEKGVPPAVGSGRK) is disordered. The span at 81-96 (ETGRLKQKHTDADTEK) shows a compositional bias: basic and acidic residues.

It belongs to the insulin family. As to quaternary structure, heterodimer of a B chain and an A chain linked by two disulfide bonds. Expressed at a high level in the embryonic mesoderm, with expression continuing after gastrulation and reducing from stage 12 onwards. Highly expressed in the embryonic anterior midgut rudiment and larval midgut.

It localises to the secreted. Functionally, possible ligand of InR/insulin-like receptor. The chain is Insulin-like peptide 4 from Drosophila melanogaster (Fruit fly).